An 88-amino-acid polypeptide reads, in one-letter code: Potassium channel toxin MeuTXKbeta3-meucin-24 (88 aa).

A signal peptide spans 1 to 22; the sequence is MMKQQFFLFLAVIVMISSVIEA. In terms of domain architecture, BetaSPN-type CS-alpha/beta spans 55–88; the sequence is EYACPVIEKWCEDHCQAKNAIGRCENTECKCLSK. Cystine bridges form between C58-C78, C65-C83, and C69-C85.

This sequence belongs to the long chain scorpion toxin family. Class 2 subfamily. In terms of tissue distribution, expressed by the venom gland.

The protein resides in the secreted. In terms of biological role, inhibits voltage-gated potassium channels. Functionally, the synthetic meucin-24 inhibits the development of P.berghei ookinetes, kills intraerythrocytic P.falciparum, and is cytotoxic to the Drosophila S2 cells at micromolar concentrations. No antibacterial, antifungal and hemolytic activities have been found at micromolar concentrations. This is Potassium channel toxin MeuTXKbeta3-meucin-24 from Mesobuthus eupeus (Lesser Asian scorpion).